Reading from the N-terminus, the 854-residue chain is DNA topoisomerase 1 type prokaryotic (854 aa).

In terms of domain architecture, Toprim spans 2–110 (SILILLESPG…KRLRFNAITK (109 aa)). Residues glutamate 8 and aspartate 79 each coordinate Mg(2+). Residues 124-610 (DKNLVDAQKA…DFYDKLKPIV (487 aa)) form the Topo IA-type catalytic domain. An interaction with DNA region spans residues 158-163 (SAGRVQ). The active-site O-(5'-phospho-DNA)-tyrosine intermediate is tyrosine 302. The disordered stretch occupies residues 802 to 854 (KSAPKGGSKTIRKPSQTKYSQTKSTKSTKSTKSTNKKFVGKSAKKTTKKTTKK). Residues 814–834 (KPSQTKYSQTKSTKSTKSTKS) show a composition bias toward low complexity. The segment covering 835 to 854 (TNKKFVGKSAKKTTKKTTKK) has biased composition (basic residues).

Belongs to the type IA topoisomerase family. Requires Mg(2+) as cofactor.

It is found in the virion. It catalyses the reaction ATP-independent breakage of single-stranded DNA, followed by passage and rejoining.. Releases the supercoiling and torsional tension of DNA, which is introduced during the DNA replication and transcription, by transiently cleaving and rejoining one strand of the DNA duplex. Introduces a single-strand break via transesterification at a target site in duplex DNA. The scissile phosphodiester is attacked by the catalytic tyrosine of the enzyme, resulting in the formation of a DNA-(5'-phosphotyrosyl)-enzyme intermediate and the expulsion of a 3'-OH DNA strand. The free DNA strand then undergoes passage around the unbroken strand, thus removing DNA supercoils. Finally, in the religation step, the DNA 3'-OH attacks the covalent intermediate to expel the active-site tyrosine and restore the DNA phosphodiester backbone. This Acanthamoeba polyphaga (Amoeba) protein is DNA topoisomerase 1 type prokaryotic (TOP1P).